A 95-amino-acid chain; its full sequence is MSYTIQAQTRTEIGKGSSRRLRHAGKVPAVIYGQGKEPVSIVFEHKDIINIQANEDFYTSVVTIVLDGKEVGVRAQAMQRHVFKPIIEHVDFVYA.

Belongs to the bacterial ribosomal protein bL25 family. Part of the 50S ribosomal subunit; part of the 5S rRNA/L5/L18/L25 subcomplex. Contacts the 5S rRNA. Binds to the 5S rRNA independently of L5 and L18.

Functionally, this is one of the proteins that binds to the 5S RNA in the ribosome where it forms part of the central protuberance. This chain is Large ribosomal subunit protein bL25, found in Shewanella putrefaciens (strain CN-32 / ATCC BAA-453).